The sequence spans 340 residues: Glyceraldehyde-3-phosphate dehydrogenase (340 aa).

Residues 11–12 and Gly111 each bind NAD(+); that span reads SI. 140–142 contributes to the D-glyceraldehyde 3-phosphate binding site; the sequence is SCN. Cys141 functions as the Nucleophile in the catalytic mechanism. Arg169 contacts NAD(+). 195–196 is a D-glyceraldehyde 3-phosphate binding site; it reads HG. Gln303 serves as a coordination point for NAD(+).

It belongs to the glyceraldehyde-3-phosphate dehydrogenase family. Homotetramer.

It is found in the cytoplasm. The catalysed reaction is D-glyceraldehyde 3-phosphate + phosphate + NADP(+) = (2R)-3-phospho-glyceroyl phosphate + NADPH + H(+). The enzyme catalyses D-glyceraldehyde 3-phosphate + phosphate + NAD(+) = (2R)-3-phospho-glyceroyl phosphate + NADH + H(+). It functions in the pathway carbohydrate degradation; glycolysis; pyruvate from D-glyceraldehyde 3-phosphate: step 1/5. The protein is Glyceraldehyde-3-phosphate dehydrogenase of Methanococcus maripaludis (strain C7 / ATCC BAA-1331).